A 324-amino-acid polypeptide reads, in one-letter code: MTKNNNDLSNSSSNPPSNRPVAGKEAELEIQRETHAAQSGQSESWLSRPIPTVKRNSLPQLTAVETEPSTECPQCHSMITNTALIFNAYVCPHCDHHLAMTARERLTGFLDHIEAELGQEFSASDPLKFVDSKPYPQRMEQMQTKTGETEALIVLQGKLRDMDVVACAFDFRFMGGSMGSVVGDRFVQAAEVALTNKAPLICFAASGGARMQEGVLSLMQMARTSAAIERLRLAGIPYIVVLTNPVYGGVTASLAMLGDIHIAEPKAMIGFAGKRVIEQTVRETLEEPFQRAEYLLEHGVIDQVVHRHQMNDTVYRLLAKLTHV.

A compositionally biased stretch (low complexity) spans M1–P16. Residues M1–P51 form a disordered region. The span at A22–H35 shows a compositional bias: basic and acidic residues. The segment covering A36–W45 has biased composition (polar residues). The region spanning P68 to V324 is the CoA carboxyltransferase N-terminal domain. The Zn(2+) site is built by C72, C75, C91, and C94. The segment at C72–C94 adopts a C4-type zinc-finger fold.

The protein belongs to the AccD/PCCB family. In terms of assembly, acetyl-CoA carboxylase is a heterohexamer composed of biotin carboxyl carrier protein (AccB), biotin carboxylase (AccC) and two subunits each of ACCase subunit alpha (AccA) and ACCase subunit beta (AccD). Zn(2+) serves as cofactor.

The protein resides in the cytoplasm. It carries out the reaction N(6)-carboxybiotinyl-L-lysyl-[protein] + acetyl-CoA = N(6)-biotinyl-L-lysyl-[protein] + malonyl-CoA. It participates in lipid metabolism; malonyl-CoA biosynthesis; malonyl-CoA from acetyl-CoA: step 1/1. In terms of biological role, component of the acetyl coenzyme A carboxylase (ACC) complex. Biotin carboxylase (BC) catalyzes the carboxylation of biotin on its carrier protein (BCCP) and then the CO(2) group is transferred by the transcarboxylase to acetyl-CoA to form malonyl-CoA. This chain is Acetyl-coenzyme A carboxylase carboxyl transferase subunit beta, found in Psychrobacter sp. (strain PRwf-1).